The primary structure comprises 189 residues: Adenine phosphoribosyltransferase (189 aa).

Belongs to the purine/pyrimidine phosphoribosyltransferase family. As to quaternary structure, homodimer.

The protein localises to the cytoplasm. The catalysed reaction is AMP + diphosphate = 5-phospho-alpha-D-ribose 1-diphosphate + adenine. The protein operates within purine metabolism; AMP biosynthesis via salvage pathway; AMP from adenine: step 1/1. Catalyzes a salvage reaction resulting in the formation of AMP, that is energically less costly than de novo synthesis. The polypeptide is Adenine phosphoribosyltransferase (Frankia alni (strain DSM 45986 / CECT 9034 / ACN14a)).